The chain runs to 547 residues: Chaperonin GroEL (547 aa).

Residues 30-33 (TLGP), K51, 87-91 (DGTTT), G415, 479-481 (NAA), and D495 contribute to the ATP site.

Belongs to the chaperonin (HSP60) family. Forms a cylinder of 14 subunits composed of two heptameric rings stacked back-to-back. Interacts with the co-chaperonin GroES.

It is found in the cytoplasm. It carries out the reaction ATP + H2O + a folded polypeptide = ADP + phosphate + an unfolded polypeptide.. Its function is as follows. Together with its co-chaperonin GroES, plays an essential role in assisting protein folding. The GroEL-GroES system forms a nano-cage that allows encapsulation of the non-native substrate proteins and provides a physical environment optimized to promote and accelerate protein folding. In Pseudomonas aeruginosa (strain UCBPP-PA14), this protein is Chaperonin GroEL.